Consider the following 1658-residue polypeptide: Silent chromatin protein ESC1 (1658 aa).

Positions 36-54 are enriched in basic and acidic residues; that stretch reads DSKMKDQHGYSRVHNDKYR. 2 disordered regions span residues 36–76 and 156–499; these read DSKM…SSHI and TSFQ…LENE. Acidic residues-rich tracts occupy residues 205–214 and 245–254; these read LENDEYELSE and SNDEYAEEEG. Positions 262–286 are enriched in polar residues; the sequence is GQEQANVENATQISSSDSSEGQNYS. Acidic residues predominate over residues 289–305; sequence VEMELEDDIDVESDAEK. A compositionally biased stretch (basic and acidic residues) spans 335–352; the sequence is VIEKYESDEHKVHQRYSE. Residues 365–375 are compositionally biased toward acidic residues; that stretch reads VDDESEDEESQ. Residues 386 to 397 show a composition bias toward basic and acidic residues; the sequence is VYHHNEHELDDK. The segment covering 398-407 has biased composition (acidic residues); sequence ELIEDIESSD. The segment covering 408 to 417 has biased composition (low complexity); that stretch reads SESQSAQESE. 3 stretches are compositionally biased toward basic and acidic residues: residues 425 to 435, 442 to 461, and 471 to 482; these read EYKMKNEKSTS, SESR…KVEQ, and DDIIRSSLDKNF. Thr-500 carries the phosphothreonine modification. At Ser-532 the chain carries Phosphoserine. 2 disordered regions span residues 550–584 and 589–608; these read SRNS…DESE and LKDF…GDLS. Over residues 568 to 577 the composition is skewed to polar residues; that stretch reads GHSNGSNLSG. Ser-579, Ser-583, Ser-608, and Ser-662 each carry phosphoserine. Disordered regions lie at residues 770–819, 863–964, and 1082–1115; these read SKET…EDNT, EMSS…VKGT, and ENNT…GSAK. The segment covering 800–812 has biased composition (polar residues); it reads QSKNFPGVANSTD. A phosphoserine mark is found at Ser-865 and Ser-866. The span at 869–878 shows a compositional bias: basic and acidic residues; sequence ECVKQNDDGS. Residues 879–905 show a composition bias toward polar residues; the sequence is KTQISFSTDSPDNFQESNDNTEFSSTK. Phosphoserine occurs at positions 888 and 911. Residues 918–931 are compositionally biased toward basic and acidic residues; that stretch reads SLKKELTKAEVVDK. Residues 932–956 show a composition bias toward acidic residues; the sequence is LDEEESEDSYEQDYADPEPGNDEGS. Residues Ser-937, Ser-1092, Ser-1096, Ser-1098, Ser-1166, Ser-1176, and Ser-1178 each carry the phosphoserine modification. The span at 1082-1096 shows a compositional bias: polar residues; that stretch reads ENNTNMHDQVSQACS. The segment covering 1097-1115 has biased composition (basic and acidic residues); sequence DSDRDQDSTAEKNVEGSAK. Over residues 1197 to 1207 the composition is skewed to polar residues; the sequence is STDASVNMKSV. Residues 1197–1216 form a disordered region; sequence STDASVNMKSVSSKERDSDE. A phosphoserine mark is found at Ser-1214 and Ser-1254. Positions 1261–1272 are enriched in basic and acidic residues; it reads VKDKENLHKSEE. The disordered stretch occupies residues 1261–1315; that stretch reads VKDKENLHKSEEPLVEGLQSEQHFEKKDHSENEEEFDTIYGDITSANIHSNAPDD. Residues Ser-1290, Ser-1326, and Ser-1332 each carry the phosphoserine modification. Disordered regions lie at residues 1334–1482 and 1503–1658; these read RLIE…TSPE and PATT…SVDK. The span at 1335-1366 shows a compositional bias: basic and acidic residues; it reads LIEDSRRGKNQEESDEVNTSRERDLTFEKSVN. Phosphoserine is present on residues Ser-1403, Ser-1409, Ser-1450, and Ser-1454. Over residues 1407-1423 the composition is skewed to acidic residues; sequence LNSEPEEAELYELEIEG. Positions 1463-1479 are enriched in polar residues; sequence YPYSNSENITAEKSAPT. The segment covering 1507–1537 has biased composition (basic and acidic residues); that stretch reads LEKHDKTNVTSVLDDRSEHLSSHDVDNEPHD. Ser-1539 carries the post-translational modification Phosphoserine. Basic and acidic residues-rich tracts occupy residues 1550–1564 and 1575–1591; these read PEHQ…VEVK and VLEE…DKSS. Phosphoserine is present on residues Ser-1590 and Ser-1591. Residues 1607–1626 are compositionally biased toward basic residues; that stretch reads TKAKKKSRKRNYNSRRRKRK. Positions 1648–1658 are enriched in polar residues; it reads RGQNTHPSVDK.

Interacts with SIR4.

It is found in the nucleus. Its function is as follows. Involved in the clustering of telomeres at the nuclear periphery, forming discrete subcompartments that accumulate a complex of histone-binding silencing factors like SIR4. Required for SIR4-mediated anchoring and partitioning of plasmids. This is Silent chromatin protein ESC1 (ESC1) from Saccharomyces cerevisiae (strain ATCC 204508 / S288c) (Baker's yeast).